Reading from the N-terminus, the 155-residue chain is SsrA-binding protein (155 aa).

This sequence belongs to the SmpB family.

Its subcellular location is the cytoplasm. In terms of biological role, required for rescue of stalled ribosomes mediated by trans-translation. Binds to transfer-messenger RNA (tmRNA), required for stable association of tmRNA with ribosomes. tmRNA and SmpB together mimic tRNA shape, replacing the anticodon stem-loop with SmpB. tmRNA is encoded by the ssrA gene; the 2 termini fold to resemble tRNA(Ala) and it encodes a 'tag peptide', a short internal open reading frame. During trans-translation Ala-aminoacylated tmRNA acts like a tRNA, entering the A-site of stalled ribosomes, displacing the stalled mRNA. The ribosome then switches to translate the ORF on the tmRNA; the nascent peptide is terminated with the 'tag peptide' encoded by the tmRNA and targeted for degradation. The ribosome is freed to recommence translation, which seems to be the essential function of trans-translation. The polypeptide is SsrA-binding protein (Bordetella parapertussis (strain 12822 / ATCC BAA-587 / NCTC 13253)).